Here is a 46-residue protein sequence, read N- to C-terminus: Sperm protamine P1 (46 aa).

Belongs to the protamine P1 family. As to expression, testis.

The protein localises to the nucleus. It is found in the chromosome. Its function is as follows. Protamines substitute for histones in the chromatin of sperm during the haploid phase of spermatogenesis. They compact sperm DNA into a highly condensed, stable and inactive complex. The sequence is that of Sperm protamine P1 (PRM1) from Hypsugo savii (Savi's pipistrelle).